A 289-amino-acid polypeptide reads, in one-letter code: Probable aquaporin PIP-type 7a (289 aa).

Positions 1–39 (MEAKEQDVSLGANKFPERQPLGIAAQSQDEPKDYQEPPP) are disordered. At 1 to 57 (MEAKEQDVSLGANKFPERQPLGIAAQSQDEPKDYQEPPPAPLFEPSELTSWSFYRAG) the chain is on the cytoplasmic side. Residues 58–78 (IAEFIATFLFLYITVLTVMGV) traverse the membrane as a helical segment. Residues 79–91 (VRESSKCKTVGIQ) lie on the Extracellular side of the membrane. The chain crosses the membrane as a helical span at residues 92–112 (GIAWAFGGMIFALVYCTAGIS). The Cytoplasmic segment spans residues 113–135 (GGHINPAVTFGLFLARKLSLTRA). The short motif at 117–119 (NPA) is the NPA 1 element. Residues 136 to 156 (IFYMVMQVLGAICGAGVVKGF) form a helical membrane-spanning segment. The Extracellular segment spans residues 157–178 (EGKQRFGDLNGGANFVAPGYTK). A helical transmembrane segment spans residues 179–199 (GDGLGAEIVGTFILVYTVFSA). Residues 200–212 (TDAKRSARDSHVP) are Cytoplasmic-facing. A helical membrane pass occupies residues 213–233 (ILAPLPIGFAVFLVHLATIPI). The Extracellular portion of the chain corresponds to 234–260 (TGTGINPARSLGAAIVFNKKIGWNDHW). The NPA 2 signature appears at 239-241 (NPA). The helical transmembrane segment at 261–281 (IFWVGPFIGAALAALYHQVVI) threads the bilayer. The Cytoplasmic segment spans residues 282–289 (RAIPFKSK).

Belongs to the MIP/aquaporin (TC 1.A.8) family. PIP (TC 1.A.8.11) subfamily.

It is found in the cell membrane. Aquaporins facilitate the transport of water and small neutral solutes across cell membranes. This chain is Probable aquaporin PIP-type 7a (TRG-31), found in Pisum sativum (Garden pea).